We begin with the raw amino-acid sequence, 282 residues long: Armadillo repeat-containing protein 1 (282 aa).

At M1 the chain carries N-acetylmethionine. One copy of the ARM repeat lies at 39 to 81; sequence GCLPGLILSMDHPNPPVVHSALLALRYLAECRANREKMKGELG. A Phosphothreonine modification is found at T137. Residues S189, S246, S260, and S267 each carry the phosphoserine modification. The interval 239–261 is disordered; that stretch reads DYLPEDESPTKEQDKAVSRVGSH. Residues 246–255 show a composition bias toward basic and acidic residues; the sequence is SPTKEQDKAV.

Interacts with mitochondrial contact site and cristae organizing system (MICOS) complex components IMMT/MIC60 and MICOS10/MIC10. Interacts with mitochondrial outer membrane sorting assembly machinery (SAM) complex components SAMM50 and MTX1.

The protein localises to the cytoplasm. Its subcellular location is the mitochondrion. The protein resides in the mitochondrion outer membrane. Functionally, in association with mitochondrial contact site and cristae organizing system (MICOS) complex components and mitochondrial outer membrane sorting assembly machinery (SAM) complex components may regulate mitochondrial dynamics playing a role in determining mitochondrial length, distribution and motility. The chain is Armadillo repeat-containing protein 1 (ARMC1) from Pongo abelii (Sumatran orangutan).